Reading from the N-terminus, the 200-residue chain is FMN-dependent NADH:quinone oxidoreductase (200 aa).

FMN-binding positions include Ser10 and 95–98; that span reads MYNF.

The protein belongs to the azoreductase type 1 family. Homodimer. The cofactor is FMN.

The enzyme catalyses 2 a quinone + NADH + H(+) = 2 a 1,4-benzosemiquinone + NAD(+). It carries out the reaction N,N-dimethyl-1,4-phenylenediamine + anthranilate + 2 NAD(+) = 2-(4-dimethylaminophenyl)diazenylbenzoate + 2 NADH + 2 H(+). Functionally, quinone reductase that provides resistance to thiol-specific stress caused by electrophilic quinones. Also exhibits azoreductase activity. Catalyzes the reductive cleavage of the azo bond in aromatic azo compounds to the corresponding amines. The protein is FMN-dependent NADH:quinone oxidoreductase of Alteromonas mediterranea (strain DSM 17117 / CIP 110805 / LMG 28347 / Deep ecotype).